Here is a 605-residue protein sequence, read N- to C-terminus: Pyruvate decarboxylase 2 (605 aa).

Residues D68 and H155 each coordinate substrate. The thiamine pyrophosphate binding stretch occupies residues D433 to I515. Residues D483, N510, and G512 each contribute to the Mg(2+) site. E516 provides a ligand contact to substrate.

Belongs to the TPP enzyme family. Homotetramer. It depends on a metal cation as a cofactor. Thiamine diphosphate is required as a cofactor.

The catalysed reaction is a 2-oxocarboxylate + H(+) = an aldehyde + CO2. The chain is Pyruvate decarboxylase 2 (PDC2) from Oryza sativa subsp. japonica (Rice).